The primary structure comprises 365 residues: Aspartate-semialdehyde dehydrogenase (365 aa).

Residues T13, G14, S15, V16, S38, S41, L85, and D86 each contribute to the NADP(+) site. T13 is modified (phosphothreonine). C156 acts as the Acyl-thioester intermediate in catalysis. Residue G188 participates in NADP(+) binding. H256 (proton acceptor) is an active-site residue. A phosphoserine mark is found at S318 and S323. N343 provides a ligand contact to NADP(+).

This sequence belongs to the aspartate-semialdehyde dehydrogenase family. Homotetramer.

The protein localises to the cytoplasm. It localises to the cytosol. It is found in the nucleus. It catalyses the reaction L-aspartate 4-semialdehyde + phosphate + NADP(+) = 4-phospho-L-aspartate + NADPH + H(+). Its pathway is amino-acid biosynthesis; L-methionine biosynthesis via de novo pathway; L-homoserine from L-aspartate: step 2/3. It participates in amino-acid biosynthesis; L-threonine biosynthesis; L-threonine from L-aspartate: step 2/5. In terms of biological role, catalyzes the NADPH-dependent formation of L-aspartate 4-semialdehyde (L-ASA) by the reductive dephosphorylation of 4-phospho-L-aspartate. Mediates the second step in the biosynthesis of amino acids that derive from aspartate (the aspartate family of amino acids), including methioinine and threonine, the latter of which is a precursor to isoleucine. The polypeptide is Aspartate-semialdehyde dehydrogenase (HOM2) (Saccharomyces cerevisiae (strain ATCC 204508 / S288c) (Baker's yeast)).